Consider the following 212-residue polypeptide: 3-isopropylmalate dehydratase small subunit (212 aa).

This sequence belongs to the LeuD family. LeuD type 1 subfamily. As to quaternary structure, heterodimer of LeuC and LeuD.

The enzyme catalyses (2R,3S)-3-isopropylmalate = (2S)-2-isopropylmalate. Its pathway is amino-acid biosynthesis; L-leucine biosynthesis; L-leucine from 3-methyl-2-oxobutanoate: step 2/4. Functionally, catalyzes the isomerization between 2-isopropylmalate and 3-isopropylmalate, via the formation of 2-isopropylmaleate. This is 3-isopropylmalate dehydratase small subunit from Nitrosomonas eutropha (strain DSM 101675 / C91 / Nm57).